We begin with the raw amino-acid sequence, 79 residues long: Defensin-like protein 117 (79 aa).

Residues 1–24 form the signal peptide; that stretch reads MTTTKTMLVAFVLTLFFVISSVHC. Disulfide bonds link Cys40/Cys75, Cys46/Cys68, Cys53/Cys73, and Cys57/Cys74.

The protein belongs to the DEFL family.

The protein localises to the secreted. This Arabidopsis thaliana (Mouse-ear cress) protein is Defensin-like protein 117.